The following is a 458-amino-acid chain: tRNA modification GTPase MnmE (458 aa).

3 residues coordinate (6S)-5-formyl-5,6,7,8-tetrahydrofolate: arginine 22, glutamate 84, and arginine 123. Positions 220 to 379 (GIATAIIGRP…LEKAIADLFF (160 aa)) constitute a TrmE-type G domain. Asparagine 230 provides a ligand contact to K(+). GTP contacts are provided by residues 230 to 235 (NVGKSS), 249 to 255 (TDIAGTT), and 274 to 277 (DTAG). Mg(2+) is bound at residue serine 234. The K(+) site is built by threonine 249, isoleucine 251, and threonine 254. Threonine 255 is a Mg(2+) binding site. (6S)-5-formyl-5,6,7,8-tetrahydrofolate is bound at residue lysine 458.

The protein belongs to the TRAFAC class TrmE-Era-EngA-EngB-Septin-like GTPase superfamily. TrmE GTPase family. As to quaternary structure, homodimer. Heterotetramer of two MnmE and two MnmG subunits. K(+) is required as a cofactor.

Its subcellular location is the cytoplasm. Exhibits a very high intrinsic GTPase hydrolysis rate. Involved in the addition of a carboxymethylaminomethyl (cmnm) group at the wobble position (U34) of certain tRNAs, forming tRNA-cmnm(5)s(2)U34. The protein is tRNA modification GTPase MnmE of Bacillus thuringiensis (strain Al Hakam).